The following is a 135-amino-acid chain: Large ribosomal subunit protein bL17 (135 aa).

Belongs to the bacterial ribosomal protein bL17 family. As to quaternary structure, part of the 50S ribosomal subunit. Contacts protein L32.

The sequence is that of Large ribosomal subunit protein bL17 from Listeria welshimeri serovar 6b (strain ATCC 35897 / DSM 20650 / CCUG 15529 / CIP 8149 / NCTC 11857 / SLCC 5334 / V8).